An 833-amino-acid polypeptide reads, in one-letter code: Patatin-like phospholipase domain-containing protein SNOG_00918 (833 aa).

Disordered stretches follow at residues Met-1–Asp-20 and His-49–Asn-71. Residues Trp-108–Thr-128 traverse the membrane as a helical segment. Residues Leu-301–Asn-457 enclose the PNPLA domain. A GXSXG motif is present at residues Gly-332–Gly-336. The Nucleophile role is filled by Ser-334. The active-site Proton acceptor is Asp-444. Disordered stretches follow at residues Thr-630 to Pro-657 and Leu-680 to Leu-833. Low complexity predominate over residues Ser-644 to Ser-655. Polar residues predominate over residues Asp-689–Lys-707. 3 stretches are compositionally biased toward basic and acidic residues: residues Arg-740 to Ala-750, Arg-759 to Arg-769, and Asp-782 to Val-794. Acidic residues predominate over residues Glu-809–Glu-819.

The protein belongs to the PLPL family.

It is found in the membrane. Its function is as follows. Probable lipid hydrolase. The protein is Patatin-like phospholipase domain-containing protein SNOG_00918 of Phaeosphaeria nodorum (strain SN15 / ATCC MYA-4574 / FGSC 10173) (Glume blotch fungus).